The primary structure comprises 735 residues: Delta-1-pyrroline-5-carboxylate synthase 2 (735 aa).

Residues Met1–Arg315 form a glutamate 5-kinase region. Ser79, Asp176, and Asn195 together coordinate substrate. ATP contacts are provided by residues Ser215–Asp216, Tyr221–Ser226, and Arg255–Lys261. The gamma-glutamyl phosphate reductase stretch occupies residues Glu316–Gln735.

It in the N-terminal section; belongs to the glutamate 5-kinase family. In the C-terminal section; belongs to the gamma-glutamyl phosphate reductase family.

The catalysed reaction is L-glutamate + ATP = L-glutamyl 5-phosphate + ADP. It carries out the reaction L-glutamate 5-semialdehyde + phosphate + NADP(+) = L-glutamyl 5-phosphate + NADPH + H(+). It participates in amino-acid biosynthesis; L-proline biosynthesis; L-glutamate 5-semialdehyde from L-glutamate: step 1/2. Its pathway is amino-acid biosynthesis; L-proline biosynthesis; L-glutamate 5-semialdehyde from L-glutamate: step 2/2. With respect to regulation, feedback regulated by proline. Its function is as follows. P5CS plays a key role in proline biosynthesis, leading to osmoregulation in plants. Involved in abiotic stress tolerance. The sequence is that of Delta-1-pyrroline-5-carboxylate synthase 2 from Oryza sativa subsp. japonica (Rice).